The chain runs to 577 residues: E3 ubiquitin-protein ligase MSL2 (577 aa).

The sufficient for interaction with MSL1 stretch occupies residues 1–116; the sequence is MNPVNATALY…CEYITQTTLA (116 aa). Cys-44, Cys-47, Cys-62, His-64, Cys-67, Cys-70, Cys-81, and Cys-84 together coordinate Zn(2+). The segment at 44 to 85 adopts an RING-type zinc-finger fold; it reads CCVCGHLLQDPIAPTNSTCQHYVCKTCKGKKMMMKPSCSWCK. A Glycyl lysine isopeptide (Lys-Gly) (interchain with G-Cter in SUMO2) cross-link involves residue Lys-375. The segment at 405 to 427 is disordered; the sequence is TKSMKKSHEHGSKKSHSKTKPGI. Residues 407–423 show a composition bias toward basic residues; the sequence is SMKKSHEHGSKKSHSKT. At Ser-447 the chain carries Phosphoserine. Residues 457-508 form the CXC MSL2-type domain; sequence QEKKGCKCGRATQNPSVLTCRGQRCPCYSNRKACLDCICRGCQNSYMANGEK. 9 residues coordinate Zn(2+): Cys-462, Cys-464, Cys-476, Cys-481, Cys-483, Cys-490, Cys-493, Cys-495, and Cys-498.

Belongs to the MSL2 family. In terms of assembly, component of a multisubunit histone acetyltransferase complex (MSL) at least composed of the KAT8/MOF/MYST1, MSL1/hampin, MSL2 and MSL3. Forms a MSL heterotetrameric core with MSL1.

The protein localises to the nucleus. The protein resides in the chromosome. It catalyses the reaction S-ubiquitinyl-[E2 ubiquitin-conjugating enzyme]-L-cysteine + [acceptor protein]-L-lysine = [E2 ubiquitin-conjugating enzyme]-L-cysteine + N(6)-ubiquitinyl-[acceptor protein]-L-lysine.. The protein operates within protein modification; protein ubiquitination. Its function is as follows. Non-catalytic component of the MSL histone acetyltransferase complex, a multiprotein complex that mediates the majority of histone H4 acetylation at 'Lys-16' (H4K16ac), an epigenetic mark that prevents chromatin compaction. The MSL complex is required for chromosome stability and genome integrity by maintaining homeostatic levels of H4K16ac. The MSL complex is also involved in gene dosage by promoting up-regulation of genes expressed by the X chromosome. X up-regulation is required to compensate for autosomal biallelic expression. The MSL complex also participates in gene dosage compensation by promoting expression of Tsix non-coding RNA. MSL2 plays a key role in gene dosage by ensuring biallelic expression of a subset of dosage-sensitive genes, including many haploinsufficient genes. Acts by promoting promoter-enhancer contacts, thereby preventing DNA methylation of one allele and creating a methylation-free environment for methylation-sensitive transcription factors such as SP1, KANSL1 and KANSL3. Also acts as an E3 ubiquitin ligase that promotes monoubiquitination of histone H2B at 'Lys-35' (H2BK34Ub), but not that of H2A. This activity is greatly enhanced by heterodimerization with MSL1. H2B ubiquitination in turn stimulates histone H3 methylation at 'Lys-4' (H3K4me) and 'Lys-79' (H3K79me) and leads to gene activation, including that of HOXA9 and MEIS1. Also involved in the DNA damage response by mediating ubiquitination of TP53/p53 and TP53BP1. This chain is E3 ubiquitin-protein ligase MSL2, found in Homo sapiens (Human).